The primary structure comprises 461 residues: MLTFIELLIGVVVIVGVARYIIKGYSATGVLFVGGLLLLIISAIMGHKVLPSSQASTGYSATDIVEYVKILLMSRGGDLGMMIMMLCGFAAYMTHIGANDMVVKLASKPLQYINSPYLLMIAAYFVACLMSLAVSSATGLGVLLMATLFPVMVNVGISRGAAAAICASPAAIILAPTSGDVVLAAQASEMSLIDFAFKTTLPISIAAIIGMAIAHFFWQRYLDKKEHISHEMLDVSEITTTAPAFYAILPFTPIIGVLIFDGKWGPQLHIITILVICMLIASILEFLRSFNTQKVFSGLEVAYRGMADAFANVVMLLVAAGVFAQGLSTIGFIQSLISIATSFGSASIILMLVLVILTMLAAVTTGSGNAPFYAFVEMIPKLAHSSGINPAYLTIPMLQASNLGRTLSPVSGVVVAVAGMAKISPFEVVKRTSVPVLVGLVIVIVATELMVPGTAAAVTGK.

The next 12 membrane-spanning stretches (helical) occupy residues 2–22 (LTFI…RYII), 26–46 (SATG…AIMG), 79–99 (LGMM…IGAN), 116–136 (PYLL…AVSS), 137–157 (ATGL…NVGI), 164–184 (AICA…VVLA), 199–219 (TTLP…FFWQ), 240–260 (TTAP…VLIF), 267–287 (QLHI…LEFL), 313–333 (VVML…IGFI), 343–363 (FGSA…LAAV), and 436–456 (VLVG…GTAA).

This sequence belongs to the DcuC/DcuD transporter (TC 2.A.61) family.

The protein resides in the cell inner membrane. It catalyses the reaction fumarate(in) + succinate(out) = fumarate(out) + succinate(in). Its function is as follows. Responsible for the transport of C4-dicarboxylates during anaerobic growth. Catalyzes the uptake of fumarate coupled to the export of succinate. This chain is Anaerobic C4-dicarboxylate transporter DcuC (dcuC), found in Escherichia coli O157:H7.